Consider the following 361-residue polypeptide: MLNINIEKQLGQLQLKVNTQLPLQGVTAVFGRSGAGKTSLVNLLGGLTTPDKGEISLGDTLLFKHKTVNLPPEKRRIGYVFQEARLFPHYSVNGNLTYGMRHKTPELFDKVVSLLGIEKLLSRYPSTLSGGEKQRVAIGRALLTSPQMLLMDEPLASLDLPRKRELLPYLQTLAQELKLPIVYVSHSLDEILQLADHMLVLHQGKMIAQGPLTQVWNSEQMRPWVPLQELSSLLSARIADRHPDYPMTRLLMDDGNQLWVSGQLPPTHKQLKVRIQANHVSVCTEEPKGSSVRNLLRGKIKELYPSDNGEQIQLKIALGKDELWANITPWARDELQLIPGKAIYAQIKGVTMTQMDIAESH.

Residues Met1–Gln228 form the ABC transporter domain. Gly31–Thr38 contributes to the ATP binding site. A Mop domain is found at Gly289–Asp356.

It belongs to the ABC transporter superfamily. Molybdate importer (TC 3.A.1.8) family. In terms of assembly, the complex is composed of two ATP-binding proteins (ModC), two transmembrane proteins (ModB) and a solute-binding protein (ModA).

The protein localises to the cell inner membrane. The catalysed reaction is molybdate(out) + ATP + H2O = molybdate(in) + ADP + phosphate + H(+). Functionally, part of the ABC transporter complex ModABC involved in molybdenum import. Responsible for energy coupling to the transport system. This is Molybdenum import ATP-binding protein ModC from Shewanella sp. (strain MR-7).